The chain runs to 929 residues: MGDMRDHEEVLEIPDRDSEEELENIIGQIAYRDLTIPVTEMQDPEALPTEQTATDYVPSSTSTPHPSSGQVYVELQELMMDQRNQELQWVEAAHWIGLEENLREDGVWGRPHLSYLTFWSLLELQKVFSKGTFLLGLAETSLAGVANHLLDCFIYEDQIRPQDREELLRALLLKRSHAEDLGNLEGVKPAVLTRSGGASEPLLPHQPSLETQLYCGQAEGGSEGPSTSGTLKIPPDSETTLVLVGRANFLEKPVLGFVRLKEAVPLEDLVLPEPVGFLLVLLGPEAPHVDYTQLGRAAATLMTERVFRITASMAHNREELLRSLESFLDCSLVLPPTDAPSEKALLNLVPVQKELLRRRYLPSPAKPDPNLYNTLDLNGGKGGPGDEDDPLRRTGRIFGGLIRDIRRRYPYYLSDITDALSPQVLAAVIFIYFAALSPAVTFGGLLGEKTRNLMGVSELLISTAVQGILFALLGAQPLLVLGFSGPLLVFEEAFFSFCESNNLEYIVGRAWIGFWLILLVMLVVAFEGSFLVQYISRYTQEIFSFLISLIFIYETFSKLIKIFQDYPLQQTYAPVVMKPKPQGPVPNTALFSLVLMAGTFLLAMTLRKFKNSTYFPGKLRRVIGDFGVPISILIMVLVDSFIKGTYTQKLSVPDGLKVSNSSARGWVIHPLGLYRLFPTWMMFASVLPALLVFILIFLESQITTLIVSKPERKMIKGSGFHLDLLLVVGMGGVAALFGMPWLSATTVRSVTHANALTVMGKASGPGAAAQIQEVKEQRISGLLVSVLVGLSILMEPILSRIPLAVLFGIFLYMGVTSLSGIQLFDRILLLFKPPKYHPDVPFVKRVKTWRMHLFTGIQIICLAVLWVVKSTPASLALPFVLILTVPLRRLILPLIFRELELQCLDGDDAKVTFDEENGLDEYDEVPMPV.

The residue at position 1 (M1) is an N-acetylmethionine. At 1–422 the chain is on the cytoplasmic side; sequence MGDMRDHEEV…LSDITDALSP (422 aa). S18 carries the post-translational modification Phosphoserine. 2 positions are modified to phosphotyrosine: Y31 and Y56. The segment at 46–67 is disordered; it reads ALPTEQTATDYVPSSTSTPHPS. The span at 58-67 shows a compositional bias: low complexity; sequence PSSTSTPHPS. The segment at 69-303 is globular; the sequence is GQVYVELQEL…LGRAAATLMT (235 aa). The segment at 190–199 is interaction with ANK1; the sequence is AVLTRSGGAS. 3 positions are modified to phosphoserine: S199, S222, and S363. The interval 317–370 is dimerization arm; it reads REELLRSLESFLDCSLVLPPTDAPSEKALLNLVPVQKELLRRRYLPSPAKPDPN. The segment at 366-389 is disordered; it reads KPDPNLYNTLDLNGGKGGPGDEDD. Y372 bears the Phosphotyrosine mark. Position 374 is a phosphothreonine (T374). A helical membrane pass occupies residues 423–446; it reads QVLAAVIFIYFAALSPAVTFGGLL. The Extracellular portion of the chain corresponds to 447-454; it reads GEKTRNLM. The helical transmembrane segment at 455 to 475 threads the bilayer; sequence GVSELLISTAVQGILFALLGA. The Cytoplasmic portion of the chain corresponds to 476-478; sequence QPL. Residues 479–495 traverse the membrane as a discontinuously helical segment; sequence LVLGFSGPLLVFEEAFF. Residues 496–504 are Extracellular-facing; sequence SFCESNNLE. The helical transmembrane segment at 505-525 threads the bilayer; sequence YIVGRAWIGFWLILLVMLVVA. Residues 526–537 are Cytoplasmic-facing; it reads FEGSFLVQYISR. Residues 538 to 560 form a helical membrane-spanning segment; the sequence is YTQEIFSFLISLIFIYETFSKLI. Residues 561-588 lie on the Extracellular side of the membrane; that stretch reads KIFQDYPLQQTYAPVVMKPKPQGPVPNT. A helical transmembrane segment spans residues 589-609; the sequence is ALFSLVLMAGTFLLAMTLRKF. Topologically, residues 610-620 are cytoplasmic; that stretch reads KNSTYFPGKLR. A helical transmembrane segment spans residues 621 to 641; it reads RVIGDFGVPISILIMVLVDSF. The Extracellular portion of the chain corresponds to 642 to 681; sequence IKGTYTQKLSVPDGLKVSNSSARGWVIHPLGLYRLFPTWM. N-linked (GlcNAc...) asparagine glycosylation occurs at N660. The chain crosses the membrane as a helical span at residues 682–702; the sequence is MFASVLPALLVFILIFLESQI. At 703-718 the chain is on the cytoplasmic side; it reads TTLIVSKPERKMIKGS. A helical membrane pass occupies residues 719-737; the sequence is GFHLDLLLVVGMGGVAALF. A discontinuously helical transmembrane segment spans residues 738-755; that stretch reads GMPWLSATTVRSVTHANA. Topologically, residues 756–778 are cytoplasmic; it reads LTVMGKASGPGAAAQIQEVKEQR. The next 2 membrane-spanning stretches (helical) occupy residues 779–799 and 800–818; these read ISGLLVSVLVGLSILMEPILS and RIPLAVLFGIFLYMGVTSL. Topologically, residues 819–856 are cytoplasmic; the sequence is SGIQLFDRILLLFKPPKYHPDVPFVKRVKTWRMHLFTG. Positions 857–887 form an intramembrane region, discontinuously helical; the sequence is IQIICLAVLWVVKSTPASLALPFVLILTVPL. C861 is lipidated: S-palmitoyl cysteine. Residues 888 to 929 are Cytoplasmic-facing; that stretch reads RRLILPLIFRELELQCLDGDDAKVTFDEENGLDEYDEVPMPV. Residue Y922 is modified to Phosphotyrosine.

It belongs to the anion exchanger (TC 2.A.31) family. A dimer in solution, but in its membrane environment, it exists primarily as a mixture of dimers and tetramers and spans the membrane asymmetrically. Component of the ankyrin-1 complex in the erythrocyte, composed of ANK1, RHCE, RHAG, SLC4A1, EPB42, GYPA, GYPB and AQP1. Interacts with STOM; this interaction positively regulates SLC4A1 activity. Interacts with GYPA; a GYPA monomer is bound at each end of the SLC4A1 dimer forming a heterotetramer. Three SLC4A1 dimers (Band 3-I, Band 3-II and Band 3-III) participates in the ankyrin-1 complex. Interacts (via the cytoplasmic domain) with EPB42; this interaction is mediated by the SLC4A1 Band 3-I dimer. Interacts (via the cytoplasmic domain) directly with ANK1; this interaction is mediated by the SLC4A1 Band 3-II and Band 3-III dimers. In terms of assembly, interacts with TMEM139. Detected in erythrocytes (at protein level).

The protein localises to the cell membrane. Its subcellular location is the basolateral cell membrane. The enzyme catalyses hydrogencarbonate(in) + chloride(out) = hydrogencarbonate(out) + chloride(in). In terms of biological role, functions both as a transporter that mediates electroneutral anion exchange across the cell membrane and as a structural protein. Component of the ankyrin-1 complex of the erythrocyte membrane; required for normal flexibility and stability of the erythrocyte membrane and for normal erythrocyte shape via the interactions of its cytoplasmic domain with cytoskeletal proteins, glycolytic enzymes, and hemoglobin. Functions as a transporter that mediates the 1:1 exchange of inorganic anions across the erythrocyte membrane. Mediates chloride-bicarbonate exchange in the kidney, and is required for normal acidification of the urine. The chain is Band 3 anion transport protein from Mus musculus (Mouse).